A 283-amino-acid polypeptide reads, in one-letter code: MTVQTSKNPQVDIAEDNAFFPSEYSLSQYTSPVSDLDGVDYPKPYRGKHKILVIAADERYLPTDNGKLFSTGNHPIETLLPLYHLHAAGFEFEVATISGLMTKFEYWAMPHKDEKVMPFFEQHKSLFRNPKKLADVVASLNADSEYAAIFVPGGHGALIGLPESQDVAAALQWAIKNDRFVISLCHGPAAFLALRHGDNPLNGYSICAFPDAADKQTPEIGYMPGHLTWYFGEELKKMGMNIINDDITGRVHKDRKLLTGDSPFAANALGKLAAQEMLAAYAG.

Residues His86, Glu91, and His123 each coordinate Zn(2+). Residue Cys185 is the Nucleophile of the active site.

Belongs to the peptidase C56 family. HchA subfamily. As to quaternary structure, homodimer.

It localises to the cytoplasm. The enzyme catalyses N(omega)-(1-hydroxy-2-oxopropyl)-L-arginyl-[protein] + H2O = lactate + L-arginyl-[protein] + H(+). It carries out the reaction N(6)-(1-hydroxy-2-oxopropyl)-L-lysyl-[protein] + H2O = lactate + L-lysyl-[protein] + H(+). It catalyses the reaction S-(1-hydroxy-2-oxopropyl)-L-cysteinyl-[protein] + H2O = lactate + L-cysteinyl-[protein] + H(+). The catalysed reaction is N(omega)-(1-hydroxy-2-oxoethyl)-L-arginyl-[protein] + H2O = L-arginyl-[protein] + glycolate + H(+). The enzyme catalyses N(6)-(1-hydroxy-2-oxoethyl)-L-lysyl-[protein] + H2O = glycolate + L-lysyl-[protein] + H(+). It carries out the reaction S-(1-hydroxy-2-oxoethyl)-L-cysteinyl-[protein] + H2O = glycolate + L-cysteinyl-[protein] + H(+). It catalyses the reaction N(2)-(1-hydroxy-2-oxopropyl)-dGTP + H2O = lactate + dGTP + H(+). The catalysed reaction is N(2)-(1-hydroxy-2-oxopropyl)-GTP + H2O = lactate + GTP + H(+). The enzyme catalyses N(2)-(1-hydroxy-2-oxopropyl)-GDP + H2O = lactate + GDP + H(+). It carries out the reaction N(2)-(1-hydroxy-2-oxopropyl)-GMP + H2O = lactate + GMP + H(+). It catalyses the reaction N(2)-(1-hydroxy-2-oxoethyl)-dGTP + H2O = dGTP + glycolate + H(+). The catalysed reaction is N(2)-(1-hydroxy-2-oxoethyl)-GTP + H2O = glycolate + GTP + H(+). The enzyme catalyses N(2)-(1-hydroxy-2-oxoethyl)-GDP + H2O = glycolate + GDP + H(+). It carries out the reaction N(2)-(1-hydroxy-2-oxoethyl)-GMP + H2O = glycolate + GMP + H(+). It catalyses the reaction an N(2)-(1-hydroxy-2-oxopropyl)-guanosine in RNA + H2O = a guanosine in RNA + lactate + H(+). The catalysed reaction is an N(2)-(1-hydroxy-2-oxopropyl)-2'-deoxyguanosine in DNA + H2O = a 2'-deoxyguanosine in DNA + lactate + H(+). The enzyme catalyses an N(2)-(1-hydroxy-2-oxoethyl)-guanosine in RNA + H2O = a guanosine in RNA + glycolate + H(+). It carries out the reaction an N(2)-(1-hydroxy-2-oxoethyl)-2'-deoxyguanosine in DNA + H2O = a 2'-deoxyguanosine in DNA + glycolate + H(+). In terms of biological role, protein and nucleotide deglycase that catalyzes the deglycation of the Maillard adducts formed between amino groups of proteins or nucleotides and reactive carbonyl groups of glyoxals. Thus, functions as a protein deglycase that repairs methylglyoxal- and glyoxal-glycated proteins, and releases repaired proteins and lactate or glycolate, respectively. Deglycates cysteine, arginine and lysine residues in proteins, and thus reactivates these proteins by reversing glycation by glyoxals. Acts on early glycation intermediates (hemithioacetals and aminocarbinols), preventing the formation of Schiff bases and advanced glycation endproducts (AGE). Also functions as a nucleotide deglycase able to repair glycated guanine in the free nucleotide pool (GTP, GDP, GMP, dGTP) and in DNA and RNA. Is thus involved in a major nucleotide repair system named guanine glycation repair (GG repair), dedicated to reversing methylglyoxal and glyoxal damage via nucleotide sanitization and direct nucleic acid repair. Plays an important role in protecting cells from carbonyl stress. The sequence is that of Protein/nucleic acid deglycase HchA from Escherichia coli (strain K12 / MC4100 / BW2952).